Reading from the N-terminus, the 265-residue chain is Bidirectional sugar transporter NEC1 (265 aa).

Over 1-8 (MAQLRADD) the chain is Extracellular. Residues 9–29 (LSFIFGLLGNIVSFMVFLAPV) form a helical membrane-spanning segment. The MtN3/slv 1 domain occupies 11–97 (FIFGLLGNIV…SLFLFYAPRK (87 aa)). Residues 30 to 44 (PTFYKIYKRKSSEGY) lie on the Cytoplasmic side of the membrane. Residues 45-65 (QAIPYMVALFSAGLLLYYAYL) form a helical membrane-spanning segment. The Extracellular portion of the chain corresponds to 66-71 (RKNAYL). The chain crosses the membrane as a helical span at residues 72–92 (IVSINGFGCAIELTYISLFLF). Residues 93–103 (YAPRKSKIFTG) lie on the Cytoplasmic side of the membrane. Residues 104 to 124 (WLMLLELGALGMVMPITYLLA) traverse the membrane as a helical segment. Over 125–130 (EGSHRV) the chain is Extracellular. The helical transmembrane segment at 131–151 (MIVGWICAAINVAVFAAPLSI) threads the bilayer. The 85-residue stretch at 132 to 216 (IVGWICAAIN…LLYFVYKDSK (85 aa)) folds into the MtN3/slv 2 domain. Topologically, residues 152–164 (MRQVIKTKSVEFM) are cytoplasmic. A helical membrane pass occupies residues 165 to 185 (PFTLSLFLTLCATMWFFYGFF). Residues 186-190 (KKDFY) are Extracellular-facing. A helical membrane pass occupies residues 191-211 (IAFPNILGFLFGIVQMLLYFV). Topologically, residues 212-265 (YKDSKRIDDEKSDPVREATKSKEGVEIIINIEDDNSDNALQSMEKDFSRLRTSK) are cytoplasmic.

It belongs to the SWEET sugar transporter family. In terms of assembly, forms homooligomers and/or heterooligomers. As to expression, highly expressed in nectary tissue and weakly in the stamen, especially in stomium cells and in the upper part of the filaments.

It is found in the cell membrane. Its function is as follows. Mediates both low-affinity uptake and efflux of sugar across the plasma membrane. Promotes the formation of phloem bundles in mid-veins. Probably involved in the development of stomium cells that control anther opening time. Required for pollen viability. This is Bidirectional sugar transporter NEC1 (NEC1) from Petunia hybrida (Petunia).